Reading from the N-terminus, the 698-residue chain is Elongation factor G (698 aa).

One can recognise a tr-type G domain in the interval 10–285 (ASTRNIGIMA…AVVDFLPNPL (276 aa)). GTP contacts are provided by residues 19–26 (AHIDAGKT), 83–87 (DTPGH), and 137–140 (NKMD).

Belongs to the TRAFAC class translation factor GTPase superfamily. Classic translation factor GTPase family. EF-G/EF-2 subfamily.

Its subcellular location is the cytoplasm. Catalyzes the GTP-dependent ribosomal translocation step during translation elongation. During this step, the ribosome changes from the pre-translocational (PRE) to the post-translocational (POST) state as the newly formed A-site-bound peptidyl-tRNA and P-site-bound deacylated tRNA move to the P and E sites, respectively. Catalyzes the coordinated movement of the two tRNA molecules, the mRNA and conformational changes in the ribosome. This is Elongation factor G from Frankia alni (strain DSM 45986 / CECT 9034 / ACN14a).